A 426-amino-acid chain; its full sequence is Serine--tRNA ligase (426 aa).

Residue 233–235 coordinates L-serine; the sequence is TAE. An ATP-binding site is contributed by 264 to 266; the sequence is RAE. E287 serves as a coordination point for L-serine. 351-354 contacts ATP; that stretch reads EISS. An L-serine-binding site is contributed by S387.

This sequence belongs to the class-II aminoacyl-tRNA synthetase family. Type-1 seryl-tRNA synthetase subfamily. In terms of assembly, homodimer. The tRNA molecule binds across the dimer.

Its subcellular location is the cytoplasm. It catalyses the reaction tRNA(Ser) + L-serine + ATP = L-seryl-tRNA(Ser) + AMP + diphosphate + H(+). The enzyme catalyses tRNA(Sec) + L-serine + ATP = L-seryl-tRNA(Sec) + AMP + diphosphate + H(+). It functions in the pathway aminoacyl-tRNA biosynthesis; selenocysteinyl-tRNA(Sec) biosynthesis; L-seryl-tRNA(Sec) from L-serine and tRNA(Sec): step 1/1. Functionally, catalyzes the attachment of serine to tRNA(Ser). Is also able to aminoacylate tRNA(Sec) with serine, to form the misacylated tRNA L-seryl-tRNA(Sec), which will be further converted into selenocysteinyl-tRNA(Sec). The chain is Serine--tRNA ligase from Clostridium novyi (strain NT).